The sequence spans 390 residues: Phosphoglycerate kinase (390 aa).

Residues 21 to 23 (DLN), Arg-36, 59 to 62 (HLGR), Arg-114, and Arg-147 each bind substrate. ATP contacts are provided by residues Lys-198, Glu-314, and 340-343 (GGDT).

This sequence belongs to the phosphoglycerate kinase family. In terms of assembly, monomer.

The protein localises to the cytoplasm. The enzyme catalyses (2R)-3-phosphoglycerate + ATP = (2R)-3-phospho-glyceroyl phosphate + ADP. It participates in carbohydrate degradation; glycolysis; pyruvate from D-glyceraldehyde 3-phosphate: step 2/5. The polypeptide is Phosphoglycerate kinase (Buchnera aphidicola subsp. Acyrthosiphon pisum (strain 5A)).